The sequence spans 136 residues: ATP synthase epsilon chain (136 aa).

Positions 100–120 (QGALEEANRGEDKPNQLKASN) are disordered. Basic and acidic residues predominate over residues 105-114 (EANRGEDKPN).

This sequence belongs to the ATPase epsilon chain family. In terms of assembly, F-type ATPases have 2 components, CF(1) - the catalytic core - and CF(0) - the membrane proton channel. CF(1) has five subunits: alpha(3), beta(3), gamma(1), delta(1), epsilon(1). CF(0) has three main subunits: a, b and c.

The protein localises to the cellular thylakoid membrane. In terms of biological role, produces ATP from ADP in the presence of a proton gradient across the membrane. This Synechocystis sp. (strain ATCC 27184 / PCC 6803 / Kazusa) protein is ATP synthase epsilon chain (atpC).